The following is an 87-amino-acid chain: Insertion element IS407 uncharacterized 10.0 kDa protein (87 aa).

This sequence belongs to the transposase 8 family.

In Burkholderia multivorans (strain ATCC 17616 / 249), this protein is Insertion element IS407 uncharacterized 10.0 kDa protein.